Here is a 449-residue protein sequence, read N- to C-terminus: Neurexin-1a-beta (449 aa).

A signal peptide spans 1–38; the sequence is MLRLWPGGAPGGLASILLRISLRLALWLPPLTLGSALA. The Extracellular portion of the chain corresponds to 39-373; that stretch reads EGPGELYVPQ…EVIRESSSTT (335 aa). The Laminin G-like domain occupies 71–272; that stretch reads TTYIFGRDGG…DPNVRVEGSA (202 aa). The interval 276 to 366 is disordered; the sequence is GDMPSSSITP…AKGYPSPEVI (91 aa). Low complexity predominate over residues 280–311; that stretch reads SSSITPQSSVSAAGNRSETSPSITDITTTTAS. The segment covering 312–322 has biased composition (polar residues); the sequence is NRQGKQTTTPQ. The helical transmembrane segment at 374–394 threads the bilayer; the sequence is GMVVGIVAAAALCILILLYAM. Topologically, residues 395–449 are cytoplasmic; the sequence is YKYRNRDEGSYHVDESRNYISNSATQPNGAAVKEKPIGVPKNKKDKKNKDKEYYV. Residues 415–449 are disordered; sequence SNSATQPNGAAVKEKPIGVPKNKKDKKNKDKEYYV.

This sequence belongs to the neurexin family.

The protein resides in the membrane. Neuronal cell surface protein that may be involved in cell recognition and cell adhesion. May play a role in formation or maintenance of synaptic junctions. The polypeptide is Neurexin-1a-beta (nrxn1a) (Danio rerio (Zebrafish)).